Consider the following 207-residue polypeptide: Transcriptional regulatory protein RcsA (207 aa).

The HTH luxR-type domain occupies 131–196; that stretch reads LTLPTLSLSK…VIYHIVRLTE (66 aa). The segment at residues 155 to 174 is a DNA-binding region (H-T-H motif); it reads TSQISTQMNIKAKTVSSHKG.

It belongs to the RcsA family.

In terms of biological role, component of the Rcs signaling system, which controls transcription of numerous genes. Binds to DNA to regulate expression of genes. The polypeptide is Transcriptional regulatory protein RcsA (Klebsiella aerogenes (Enterobacter aerogenes)).